The following is a 284-amino-acid chain: Bifunctional protein FolD (284 aa).

Residues 166 to 168 (GAS) and I232 each bind NADP(+).

It belongs to the tetrahydrofolate dehydrogenase/cyclohydrolase family. As to quaternary structure, homodimer.

It catalyses the reaction (6R)-5,10-methylene-5,6,7,8-tetrahydrofolate + NADP(+) = (6R)-5,10-methenyltetrahydrofolate + NADPH. It carries out the reaction (6R)-5,10-methenyltetrahydrofolate + H2O = (6R)-10-formyltetrahydrofolate + H(+). It functions in the pathway one-carbon metabolism; tetrahydrofolate interconversion. Catalyzes the oxidation of 5,10-methylenetetrahydrofolate to 5,10-methenyltetrahydrofolate and then the hydrolysis of 5,10-methenyltetrahydrofolate to 10-formyltetrahydrofolate. The protein is Bifunctional protein FolD of Shewanella oneidensis (strain ATCC 700550 / JCM 31522 / CIP 106686 / LMG 19005 / NCIMB 14063 / MR-1).